A 1192-amino-acid chain; its full sequence is DNA topoisomerase 2 (1192 aa).

ATP contacts are provided by residues Asn-64, Asn-95, and 142–149; that span reads GTNGVGLK. Positions 438, 539, and 541 each coordinate Mg(2+). A Topo IIA-type catalytic domain is found at 707-1174; the sequence is IPNFLDGMTR…PGASVWLEEI (468 aa). Tyr-800 (O-(5'-phospho-DNA)-tyrosine intermediate) is an active-site residue.

Belongs to the type II topoisomerase family. Mg(2+) is required as a cofactor. It depends on Mn(2+) as a cofactor. Requires Ca(2+) as cofactor.

The protein localises to the host cytoplasm. The catalysed reaction is ATP-dependent breakage, passage and rejoining of double-stranded DNA.. Type II topoisomerase. Processively relaxes supercoiled DNA. Displays DNA-supercoiling activity only when associated with the viral histone-like protein. In African swine fever virus (isolate Tick/South Africa/Pretoriuskop Pr4/1996) (ASFV), this protein is DNA topoisomerase 2.